The chain runs to 71 residues: Small ribosomal subunit protein bS18 (71 aa).

The protein belongs to the bacterial ribosomal protein bS18 family. As to quaternary structure, part of the 30S ribosomal subunit. Forms a tight heterodimer with protein bS6.

Functionally, binds as a heterodimer with protein bS6 to the central domain of the 16S rRNA, where it helps stabilize the platform of the 30S subunit. The protein is Small ribosomal subunit protein bS18 of Dichelobacter nodosus (strain VCS1703A).